Consider the following 157-residue polypeptide: MKLLFVCLGNICRSPAAENIMNAQIDQAGLGAKIVCDSAGTSSYHVGDSPDRRMTESLKKRGYRVQGRARQFFPEDFAEFDLILAMDGDNYRNILAQDPAGQYHHKVKMICDYTEKFGDREVPDPYYGGQAGFEHVIDLLEDACGNLLTSLGKELVN.

Cys-7 acts as the Nucleophile in catalysis. Arg-13 is an active-site residue. Residue Asp-124 is the Proton donor of the active site.

This sequence belongs to the low molecular weight phosphotyrosine protein phosphatase family.

The catalysed reaction is O-phospho-L-tyrosyl-[protein] + H2O = L-tyrosyl-[protein] + phosphate. The chain is Putative low molecular weight protein-tyrosine-phosphatase slr0328 from Synechocystis sp. (strain ATCC 27184 / PCC 6803 / Kazusa).